The following is a 502-amino-acid chain: Carbon catabolite-derepressing protein kinase (502 aa).

Residues 14–269 (YYLGKILGVG…IGEIRKHSWF (256 aa)) enclose the Protein kinase domain. ATP is bound by residues 20–28 (LGVGTFAKV) and lysine 43. The Proton acceptor role is filled by aspartate 140. Threonine 173 bears the Phosphothreonine; by autocatalysis mark. A UBA domain is found at 290-330 (MIDEDTLRDVVKLGYDKDHVCESLCNRLQNEETVAYYLLLD). The KA1 domain occupies 453 to 501 (NSRLPAVIKFEIQLYKTKDDKYLLDMQRVTGPQLLFLEFCAAFLTNLRV).

This sequence belongs to the protein kinase superfamily. CAMK Ser/Thr protein kinase family. SNF1 subfamily.

It carries out the reaction L-seryl-[protein] + ATP = O-phospho-L-seryl-[protein] + ADP + H(+). The enzyme catalyses L-threonyl-[protein] + ATP = O-phospho-L-threonyl-[protein] + ADP + H(+). Its function is as follows. Essential for release from glucose repression. The chain is Carbon catabolite-derepressing protein kinase (RKIN1) from Secale cereale (Rye).